We begin with the raw amino-acid sequence, 688 residues long: Elongation factor G (688 aa).

Residues E8–L282 form the tr-type G domain. GTP-binding positions include A17 to T24, D81 to H85, and N135 to D138.

This sequence belongs to the TRAFAC class translation factor GTPase superfamily. Classic translation factor GTPase family. EF-G/EF-2 subfamily.

It localises to the cytoplasm. Its function is as follows. Catalyzes the GTP-dependent ribosomal translocation step during translation elongation. During this step, the ribosome changes from the pre-translocational (PRE) to the post-translocational (POST) state as the newly formed A-site-bound peptidyl-tRNA and P-site-bound deacylated tRNA move to the P and E sites, respectively. Catalyzes the coordinated movement of the two tRNA molecules, the mRNA and conformational changes in the ribosome. The polypeptide is Elongation factor G (Clostridium perfringens (strain ATCC 13124 / DSM 756 / JCM 1290 / NCIMB 6125 / NCTC 8237 / Type A)).